The sequence spans 1428 residues: Vacuolar protein sorting-associated protein 8 homolog (1428 aa).

Ser-26, Ser-32, and Ser-127 each carry phosphoserine. One copy of the WD repeat lies at 195–236 (VGGQYGAISALSINNDCSRLLCGFAKGQITMWDLASGKLLRS). An RING-type; atypical zinc finger spans residues 1258 to 1310 (CSICLQQYKRRQEMADEIIVFSCGHLYHSFCLQNKECTVEFEGQTRWTCYKCS). The tract at residues 1330–1356 (ITPSQVKMSPSYHQSKGDPTAKKGTSE) is disordered. The span at 1331 to 1343 (TPSQVKMSPSYHQ) shows a compositional bias: polar residues. Residues 1344 to 1354 (SKGDPTAKKGT) are compositionally biased toward basic and acidic residues.

Belongs to the VPS8 family. In terms of assembly, interacts with RAB5C. Interacts with TGFBRAP1. Component of the putative class C core vacuole/endosome tethering (CORVET) complex; the core of which composed of the class C Vps proteins VPS11, VPS16, VPS18 and VPS33A, is associated with VPS8 and TGFBRAP1.

The protein resides in the early endosome. Plays a role in vesicle-mediated protein trafficking of the endocytic membrane transport pathway. Believed to act as a component of the putative CORVET endosomal tethering complexes which is proposed to be involved in the Rab5-to-Rab7 endosome conversion probably implicating MON1A/B, and via binding SNAREs and SNARE complexes to mediate tethering and docking events during SNARE-mediated membrane fusion. The CORVET complex is proposed to function as a Rab5 effector to mediate early endosome fusion probably in specific endosome subpopulations. Functions predominantly in APPL1-containing endosomes. The polypeptide is Vacuolar protein sorting-associated protein 8 homolog (VPS8) (Homo sapiens (Human)).